A 438-amino-acid chain; its full sequence is MPCTCTWRNWRQWIRPLAVVLYLLSIVVAVPLCVWELQKLEVGIHTKAWFIAGIFLLLTIPISLWVILQHLVHYTQPELQKPIIRILWMVPIYSLDSWIALKYPSIAIYVDTCRECYEAYVIYNFMGFLTNYLTNRYPNLVLIIEAKDQQKHFPPLCCCPPWTMGEVLLFRCKLGVLQYTVVRPFTTIIALVCELLDIYDEGNFSFSNAWTYLVIINNMSQLFAMYCLLLFYKVLKEELSPIQPVGKFLCVKLVVFVSFWQAVVIALLVKVGVISEKHTWEWQTVEAVATGLQDFIICIEMFLAAIAHHYTFSYKPYVQEAEEGSCFDSFLAMWDVSDIRDDISEQVRHVGRTVMGHPRKKFFPEDQDQNEHTSLLSSSSQDALSVASSVPPSPVGHYQGFGHTVTPQTTPTTANASDDTGNDAAGVREEPSEKPVAS.

7 helical membrane-spanning segments follow: residues Leu-17 to Leu-37, Ala-48 to Leu-68, Ile-86 to Ile-106, Val-176 to Leu-196, Tyr-212 to Tyr-232, Val-254 to Ile-274, and Ala-287 to Ala-307. The segment at Pro-358–Ser-438 is disordered. Low complexity-rich tracts occupy residues Ser-374–Val-390 and Thr-404–Thr-413. The span at Gly-426–Ser-438 shows a compositional bias: basic and acidic residues.

The protein belongs to the TMEM184 family.

It localises to the membrane. In terms of biological role, possible tumor suppressor which may play a role in cell growth. This Bos taurus (Bovine) protein is Transmembrane protein 184C (TMEM184C).